The primary structure comprises 118 residues: Ribonuclease P protein component (118 aa).

Belongs to the RnpA family. Consists of a catalytic RNA component (M1 or rnpB) and a protein subunit.

The catalysed reaction is Endonucleolytic cleavage of RNA, removing 5'-extranucleotides from tRNA precursor.. RNaseP catalyzes the removal of the 5'-leader sequence from pre-tRNA to produce the mature 5'-terminus. It can also cleave other RNA substrates such as 4.5S RNA. The protein component plays an auxiliary but essential role in vivo by binding to the 5'-leader sequence and broadening the substrate specificity of the ribozyme. This Rickettsia felis (strain ATCC VR-1525 / URRWXCal2) (Rickettsia azadi) protein is Ribonuclease P protein component.